The sequence spans 407 residues: L-amino-acid oxidase (407 aa).

C10 and C94 are joined by a disulfide. N93 carries an N-linked (GlcNAc...) asparagine glycan. A substrate-binding site is contributed by H144. FAD is bound at residue V182. C252 and C333 are joined by a disulfide. An N-linked (GlcNAc...) asparagine glycan is attached at N282. Y293 lines the substrate pocket. FAD contacts are provided by residues E378 and G385–T390. A substrate-binding site is contributed by G385–W386.

The protein belongs to the flavin monoamine oxidase family. FIG1 subfamily. Homodimer; non-covalently linked. The cofactor is FAD. Expressed by the venom gland.

It localises to the secreted. The catalysed reaction is an L-alpha-amino acid + O2 + H2O = a 2-oxocarboxylate + H2O2 + NH4(+). The enzyme catalyses L-leucine + O2 + H2O = 4-methyl-2-oxopentanoate + H2O2 + NH4(+). It catalyses the reaction L-phenylalanine + O2 + H2O = 3-phenylpyruvate + H2O2 + NH4(+). It carries out the reaction L-isoleucine + O2 + H2O = (S)-3-methyl-2-oxopentanoate + H2O2 + NH4(+). The catalysed reaction is L-aspartate + O2 + H2O = oxaloacetate + H2O2 + NH4(+). The enzyme catalyses L-lysine + O2 + H2O = 6-amino-2-oxohexanoate + H2O2 + NH4(+). It catalyses the reaction L-glutamate + O2 + H2O = H2O2 + 2-oxoglutarate + NH4(+). Its function is as follows. Catalyzes an oxidative deamination of predominantly hydrophobic and aromatic L-amino acids, thus producing hydrogen peroxide that may contribute to the diverse toxic effects of this enzyme. Is highly active on L-Leu followed by L-Phe and L-Ile, moderately active on L-Asp, L-Glu, and L-Lys, and not active on L-Pro, L-Asn, L-Gly, L-Ser and L-Cys. Exhibits diverse biological activities such as antibacterial activity (Minimal inhibitory concentrations (MIC) are 9.0 ug/ml against S.aureus, 144.0 ug/ml against P.aeruginosa and 288.0 ug/ml against E.coli) and inhibition of ADP- and TMVA-induced platelet aggregation. Effects of snake L-amino oxidases on platelets are controversial, since they either induce aggregation or inhibit agonist-induced aggregation. These different effects are probably due to different experimental conditions. Unlike other snake venom L-amino acid oxidases, does not induce hemorrhage. This protein may also induce hemolysis, edema, apoptosis and have antiparasitic activities. The chain is L-amino-acid oxidase from Daboia siamensis (Eastern Russel's viper).